The chain runs to 227 residues: 7-cyano-7-deazaguanine synthase (227 aa).

9-19 is an ATP binding site; it reads LSGGLDSATVL. Residues Cys189, Cys199, Cys202, and Cys205 each contribute to the Zn(2+) site.

The protein belongs to the QueC family. Zn(2+) serves as cofactor.

The enzyme catalyses 7-carboxy-7-deazaguanine + NH4(+) + ATP = 7-cyano-7-deazaguanine + ADP + phosphate + H2O + H(+). The protein operates within purine metabolism; 7-cyano-7-deazaguanine biosynthesis. Catalyzes the ATP-dependent conversion of 7-carboxy-7-deazaguanine (CDG) to 7-cyano-7-deazaguanine (preQ(0)). The protein is 7-cyano-7-deazaguanine synthase of Cupriavidus metallidurans (strain ATCC 43123 / DSM 2839 / NBRC 102507 / CH34) (Ralstonia metallidurans).